A 402-amino-acid chain; its full sequence is Probable sugar efflux transporter (402 aa).

12 helical membrane passes run 15-35 (VLIM…PVAM), 51-71 (GLMM…AMLA), 84-104 (LFII…FWIL), 109-129 (MCIA…VMRI), 137-157 (QALG…LPIG), 168-188 (VTFG…IRLL), 209-229 (PLLL…FTAY), 245-265 (NFAT…SLLF), 276-296 (FIVV…FSTE), 297-317 (AIIA…CIGL), 333-353 (VATA…ALFG), and 365-385 (IGYT…TTHL).

The protein belongs to the major facilitator superfamily. SotB (TC 2.A.1.2) family.

Its subcellular location is the cell inner membrane. In terms of biological role, involved in the efflux of sugars. The physiological role may be the reduction of the intracellular concentration of toxic sugars or sugar metabolites. This is Probable sugar efflux transporter from Haemophilus influenzae (strain 86-028NP).